Reading from the N-terminus, the 521-residue chain is Calcium-dependent protein kinase 33 (521 aa).

G2 carries the N-myristoyl glycine lipid modification. The disordered stretch occupies residues 15-56 (PQQNGERSVEIENRRRSTHQDPSKISTGTNQPPPWRNPAKHS). Residues 21–36 (RSVEIENRRRSTHQDP) are compositionally biased toward basic and acidic residues. The Protein kinase domain occupies 73–331 (YTLSKELGRG…AAEVLKHPWL (259 aa)). ATP is bound by residues 79 to 87 (LGRGQFGVT) and K102. D197 functions as the Proton acceptor in the catalytic mechanism. Position 237 is a phosphoserine (S237). An autoinhibitory domain region spans residues 337–367 (ASDKPIDSAVLSRMKQFRAMNKLKKLALKVI). EF-hand domains lie at 374 to 409 (EEIQ…LGSR), 410 to 445 (LTEA…RHRL), 446 to 481 (ESNE…YGMG), and 482 to 516 (DDAT…GNPQ). Residues D387, D389, S391, T393, E398, D423, D425, N427, S429, E434, D459, D461, S463, Y465, E470, D494, D496, D498, R500, and E505 each coordinate Ca(2+).

Belongs to the protein kinase superfamily. Ser/Thr protein kinase family. CDPK subfamily. In terms of assembly, interacts with THI1. Interacts with FD and FDP. In terms of processing, autophosphorylated. As to expression, expressed in primary roots, leaves, inflorescences, siliques and guard cells. Expressed in the shoot apical meristem.

It localises to the cell membrane. Its subcellular location is the nucleus. The protein resides in the cytoplasm. The catalysed reaction is L-seryl-[protein] + ATP = O-phospho-L-seryl-[protein] + ADP + H(+). It carries out the reaction L-threonyl-[protein] + ATP = O-phospho-L-threonyl-[protein] + ADP + H(+). Activated by calcium. Autophosphorylation may play an important role in the regulation of the kinase activity. Repressed by THI1 through a negative regulation of the autophosphorylation activity in the presence of Ca(2+). In terms of biological role, ca(2+)-dependent protein kinase. Negative regulator of stomatal closure and slow anion currents. Unable to phosphorylate THI1 in vitro, but the kinase activity is essential for the stomatal closure regulation. Phosphorylates FD. May play a role in signal transduction pathways that involve calcium as a second messenger. This chain is Calcium-dependent protein kinase 33, found in Arabidopsis thaliana (Mouse-ear cress).